The following is a 316-amino-acid chain: L-lactate dehydrogenase 3 (316 aa).

The NAD(+) site is built by V16, D37, R42, and Y68. Residue R91 participates in substrate binding. Residues S104, A121–N123, and T146 each bind NAD(+). Residue N123 to D126 coordinates substrate. Residue D151–R154 participates in substrate binding. Beta-D-fructose 1,6-bisphosphate is bound by residues R156 and H171. Residue H178 is the Proton acceptor of the active site. T233 provides a ligand contact to substrate.

It belongs to the LDH/MDH superfamily. LDH family. Homotetramer.

It localises to the cytoplasm. It catalyses the reaction (S)-lactate + NAD(+) = pyruvate + NADH + H(+). It functions in the pathway fermentation; pyruvate fermentation to lactate; (S)-lactate from pyruvate: step 1/1. Its activity is regulated as follows. Allosterically activated by fructose 1,6-bisphosphate (FBP). Functionally, catalyzes the conversion of lactate to pyruvate. The sequence is that of L-lactate dehydrogenase 3 from Bacillus cereus (strain ATCC 10987 / NRS 248).